We begin with the raw amino-acid sequence, 250 residues long: Cytochrome c oxidase subunit 2 (250 aa).

At 1-39 the chain is on the mitochondrial intermembrane side; it reads MFFLINKLVMNFDAPSPWGIYFQDSATPQMEGLNELHDN. A helical membrane pass occupies residues 40–60; that stretch reads IMYYLVVILFAVGWILLSIVI. Topologically, residues 61–81 are mitochondrial matrix; the sequence is NYVSTKSPISHKYLNHGTLIE. The chain crosses the membrane as a helical span at residues 82–104; that stretch reads LIWTITPAVILILIAFPSFKLLY. Residues 105 to 250 are Mitochondrial intermembrane-facing; that stretch reads LMDEVSDPSM…EKFLIWLKEQ (146 aa). 6 residues coordinate Cu cation: histidine 185, cysteine 220, glutamate 222, cysteine 224, histidine 228, and methionine 231. Glutamate 222 serves as a coordination point for Mg(2+).

The protein belongs to the cytochrome c oxidase subunit 2 family. Component of the cytochrome c oxidase (complex IV, CIV), a multisubunit enzyme composed of a catalytic core of 3 subunits and several supernumerary subunits. The complex exists as a monomer or a dimer and forms supercomplexes (SCs) in the inner mitochondrial membrane with ubiquinol-cytochrome c oxidoreductase (cytochrome b-c1 complex, complex III, CIII). Cu cation serves as cofactor.

The protein localises to the mitochondrion inner membrane. The catalysed reaction is 4 Fe(II)-[cytochrome c] + O2 + 8 H(+)(in) = 4 Fe(III)-[cytochrome c] + 2 H2O + 4 H(+)(out). Its function is as follows. Component of the cytochrome c oxidase, the last enzyme in the mitochondrial electron transport chain which drives oxidative phosphorylation. The respiratory chain contains 3 multisubunit complexes succinate dehydrogenase (complex II, CII), ubiquinol-cytochrome c oxidoreductase (cytochrome b-c1 complex, complex III, CIII) and cytochrome c oxidase (complex IV, CIV), that cooperate to transfer electrons derived from NADH and succinate to molecular oxygen, creating an electrochemical gradient over the inner membrane that drives transmembrane transport and the ATP synthase. Cytochrome c oxidase is the component of the respiratory chain that catalyzes the reduction of oxygen to water. Electrons originating from reduced cytochrome c in the intermembrane space (IMS) are transferred via the dinuclear copper A center (CU(A)) of subunit 2 and heme A of subunit 1 to the active site in subunit 1, a binuclear center (BNC) formed by heme A3 and copper B (CU(B)). The BNC reduces molecular oxygen to 2 water molecules using 4 electrons from cytochrome c in the IMS and 4 protons from the mitochondrial matrix. The chain is Cytochrome c oxidase subunit 2 (COII) from Podospora anserina (strain S / ATCC MYA-4624 / DSM 980 / FGSC 10383) (Pleurage anserina).